Here is a 155-residue protein sequence, read N- to C-terminus: Small ribosomal subunit protein uS7c (155 aa).

The protein belongs to the universal ribosomal protein uS7 family. In terms of assembly, part of the 30S ribosomal subunit.

It localises to the plastid. The protein localises to the chloroplast. One of the primary rRNA binding proteins, it binds directly to 16S rRNA where it nucleates assembly of the head domain of the 30S subunit. The sequence is that of Small ribosomal subunit protein uS7c (rps7) from Spathiphyllum wallisii (Peace lily).